A 156-amino-acid polypeptide reads, in one-letter code: Ribosomal RNA large subunit methyltransferase H (156 aa).

S-adenosyl-L-methionine is bound by residues leucine 72, glycine 104, and 123 to 128; that span reads FGKMVW.

It belongs to the RNA methyltransferase RlmH family. As to quaternary structure, homodimer.

It is found in the cytoplasm. The enzyme catalyses pseudouridine(1915) in 23S rRNA + S-adenosyl-L-methionine = N(3)-methylpseudouridine(1915) in 23S rRNA + S-adenosyl-L-homocysteine + H(+). Its function is as follows. Specifically methylates the pseudouridine at position 1915 (m3Psi1915) in 23S rRNA. In Ruegeria sp. (strain TM1040) (Silicibacter sp.), this protein is Ribosomal RNA large subunit methyltransferase H.